Reading from the N-terminus, the 426-residue chain is Limonoid 21-O-acetyltransferse (426 aa).

Active-site proton acceptor residues include His-152 and Asp-365.

The protein belongs to the plant acyltransferase family. In terms of assembly, monomer. Expressed in maturing fruits and in juice vesicles.

The enzyme catalyses isomeliandiol + acetyl-CoA = 21-O-acetyl-isomeliandiol + CoA. Its pathway is secondary metabolite biosynthesis; terpenoid biosynthesis. Acetyltransferase involved in the biosynthesis of limonoids triterpene natural products such as limonin, a compound with insecticidal activity responsible for the bitter taste in citrus. Catalyzes the formation of 21-O-acetyl-isomeliandiol from isomeliandiol. This chain is Limonoid 21-O-acetyltransferse, found in Citrus sinensis (Sweet orange).